Reading from the N-terminus, the 248-residue chain is Large ribosomal subunit protein uL30B (248 aa).

Residues 1-45 form a disordered region; sequence MSQKKQKIQVEQKVPENVAKKTQRDSKLRDAVAKRRTERLAANKT. Residues 8–41 are compositionally biased toward basic and acidic residues; that stretch reads IQVEQKVPENVAKKTQRDSKLRDAVAKRRTERLA.

This sequence belongs to the universal ribosomal protein uL30 family.

Its function is as follows. Binds to G-rich structures in 28S rRNA and in mRNAs. Plays a regulatory role in the translation apparatus; inhibits cell-free translation of mRNAs. The protein is Large ribosomal subunit protein uL30B (Rpl7-2) of Paramecium tetraurelia.